Reading from the N-terminus, the 319-residue chain is Beta-ketoacyl-[acyl-carrier-protein] synthase III (319 aa).

Catalysis depends on residues Cys-115 and His-246. The tract at residues 247 to 251 (QANLR) is ACP-binding. Residue Asn-276 is part of the active site.

The protein belongs to the thiolase-like superfamily. FabH family. In terms of assembly, homodimer.

The protein localises to the cytoplasm. It catalyses the reaction malonyl-[ACP] + acetyl-CoA + H(+) = 3-oxobutanoyl-[ACP] + CO2 + CoA. It functions in the pathway lipid metabolism; fatty acid biosynthesis. Its function is as follows. Catalyzes the condensation reaction of fatty acid synthesis by the addition to an acyl acceptor of two carbons from malonyl-ACP. Catalyzes the first condensation reaction which initiates fatty acid synthesis and may therefore play a role in governing the total rate of fatty acid production. Possesses both acetoacetyl-ACP synthase and acetyl transacylase activities. Its substrate specificity determines the biosynthesis of branched-chain and/or straight-chain of fatty acids. The chain is Beta-ketoacyl-[acyl-carrier-protein] synthase III from Coxiella burnetii (strain RSA 493 / Nine Mile phase I).